The primary structure comprises 305 residues: Regulator of microtubule dynamics protein 1 (305 aa).

Lys160 is modified (N6-succinyllysine). TPR repeat units follow at residues 163–199 (AICISDVGDYEGIKVKIANAYVIKEHFEKAIELNPKD) and 217–253 (PWYQRRIAKVLFANPPSSTYEEALRYFHKAEEVDPNF). The residue at position 245 (Lys245) is an N6-succinyllysine.

Belongs to the RMDN family. In terms of assembly, interacts with microtubules.

It localises to the cytoplasm. The protein resides in the cytoskeleton. It is found in the spindle. The protein localises to the spindle pole. This is Regulator of microtubule dynamics protein 1 (Rmdn1) from Mus musculus (Mouse).